A 142-amino-acid chain; its full sequence is Large ribosomal subunit protein uL13 (142 aa).

It belongs to the universal ribosomal protein uL13 family. In terms of assembly, part of the 50S ribosomal subunit.

Functionally, this protein is one of the early assembly proteins of the 50S ribosomal subunit, although it is not seen to bind rRNA by itself. It is important during the early stages of 50S assembly. The protein is Large ribosomal subunit protein uL13 of Vibrio vulnificus (strain CMCP6).